The sequence spans 588 residues: Transcription factor tau 60 kDa subunit (588 aa).

The sufficient for SPT15-binding stretch occupies residues 399 to 588 (LPKLPENFSM…VYCGTTLEVM (190 aa)).

As to quaternary structure, heterodimer with TFC6. Component of the TFIIIC complex composed of TFC1, TFC3, TFC4, TFC6, TFC7 and TFC8. The subunits are organized in two globular domains, tauA and tauB, connected by a proteolysis-sensitive and flexible linker. Interacts with SPT15 and directly with TFC6.

The protein localises to the nucleus. Functionally, TFIIIC mediates tRNA and 5S RNA gene activation by binding to intragenic promoter elements. Upstream of the transcription start site, TFIIIC assembles the initiation complex TFIIIB-TFIIIC-tDNA, which is sufficient for RNA polymerase III recruitment and function. Part of the tauB domain of TFIIIC that binds boxB DNA promoter sites of tRNA and similar genes. Plays a role in TFIIB assembly through its interaction with SPT15/TBP. Essential for cell viability. This chain is Transcription factor tau 60 kDa subunit (TFC8), found in Saccharomyces cerevisiae (strain ATCC 204508 / S288c) (Baker's yeast).